Consider the following 227-residue polypeptide: Probable septum site-determining protein MinC (227 aa).

The protein belongs to the MinC family. Interacts with MinD and FtsZ.

In terms of biological role, cell division inhibitor that blocks the formation of polar Z ring septums. Rapidly oscillates between the poles of the cell to destabilize FtsZ filaments that have formed before they mature into polar Z rings. Prevents FtsZ polymerization. In Bacillus pumilus (strain SAFR-032), this protein is Probable septum site-determining protein MinC.